The following is a 92-amino-acid chain: uncharacterized protein (92 aa).

The tract at residues 25–53 is disordered; it reads AGRGVRREARDTPCRGTAEGLATSQPEDG.

This is an uncharacterized protein from Treponema pallidum (strain Nichols).